Here is a 99-residue protein sequence, read N- to C-terminus: DNA-directed RNA polymerase subunit omega (99 aa).

Low complexity predominate over residues 1 to 10 (MSSTSAASAA). The tract at residues 1-20 (MSSTSAASAAGQGALPAYDT) is disordered.

The protein belongs to the RNA polymerase subunit omega family. In terms of assembly, the RNAP catalytic core consists of 2 alpha, 1 beta, 1 beta' and 1 omega subunit. When a sigma factor is associated with the core the holoenzyme is formed, which can initiate transcription.

The enzyme catalyses RNA(n) + a ribonucleoside 5'-triphosphate = RNA(n+1) + diphosphate. Functionally, promotes RNA polymerase assembly. Latches the N- and C-terminal regions of the beta' subunit thereby facilitating its interaction with the beta and alpha subunits. The polypeptide is DNA-directed RNA polymerase subunit omega (Rhodococcus erythropolis (strain PR4 / NBRC 100887)).